Here is a 125-residue protein sequence, read N- to C-terminus: PCNA-associated factor (125 aa).

Positions 1–125 are disordered; sequence MVRTKADSAG…SEEAADSDDE (125 aa). Positions 8–17 are enriched in low complexity; that stretch reads SAGSSASSGS. The D-box motif lies at 28–39; it reads RKTFGSSSSGSN. Positions 68–79 match the PIP-box motif; that stretch reads QKGIGEFFGSPS. Positions 85 to 87 match the KEN box motif; sequence KEN. The short motif at 95 to 107 is the Initiation motif element; it reads EAGGSGAGKAPRK. Positions 115–125 are enriched in acidic residues; sequence PSEEAADSDDE.

As to quaternary structure, interacts with pcna.

Its subcellular location is the nucleus. It is found in the cytoplasm. The protein resides in the perinuclear region. In terms of biological role, PCNA-binding protein that acts as a regulator of DNA repair during DNA replication. Following DNA damage, the interaction with pcna is disrupted, facilitating the interaction between monoubiquitinated pcna and the translesion DNA synthesis DNA polymerase eta (polh) at stalled replisomes, facilitating the bypass of replication-fork-blocking lesions. Also acts as a regulator of centrosome number. The chain is PCNA-associated factor from Xenopus tropicalis (Western clawed frog).